The following is a 21-amino-acid chain: Peptide PGLa-R4 (21 aa).

Leu21 is modified (leucine amide).

In terms of tissue distribution, expressed by the skin glands.

The protein resides in the secreted. In terms of biological role, antimicrobial peptide. In Xenopus ruwenzoriensis (Uganda clawed frog), this protein is Peptide PGLa-R4.